The chain runs to 211 residues: Ubiquitin-conjugating enzyme E2 S-C (211 aa).

Residues 11 to 157 (HIIRRVYKEV…AKLMTEIHAQ (147 aa)) form the UBC core domain. Residue Cys-95 is the Glycyl thioester intermediate of the active site. The segment at 158 to 211 (GSTLRGKDPTDPCSSASATVVSGDGPMAKKHAGDRDKKLAAKKKTDKKRALRRL) is disordered. The span at 197 to 211 (AAKKKTDKKRALRRL) shows a compositional bias: basic residues.

This sequence belongs to the ubiquitin-conjugating enzyme family.

The catalysed reaction is S-ubiquitinyl-[E1 ubiquitin-activating enzyme]-L-cysteine + [E2 ubiquitin-conjugating enzyme]-L-cysteine = [E1 ubiquitin-activating enzyme]-L-cysteine + S-ubiquitinyl-[E2 ubiquitin-conjugating enzyme]-L-cysteine.. The protein operates within protein modification; protein ubiquitination. In terms of biological role, catalyzes the covalent attachment of ubiquitin to other proteins. Acts as an essential factor of the anaphase promoting complex/cyclosome (APC/C), a cell cycle-regulated ubiquitin ligase that controls progression through mitosis. Acts by specifically elongating 'Lys-11'-linked polyubiquitin chains initiated by the E2 enzyme ube2c/ubch10 on APC/C substrates, enhancing the degradation of APC/C substrates by the proteasome and promoting mitotic exit. The sequence is that of Ubiquitin-conjugating enzyme E2 S-C (ube2s-c) from Xenopus laevis (African clawed frog).